The sequence spans 175 residues: MRFVNTLPLIFGLTAALGSSMALALPSDREQPIRVQADSAELDDKQGVAVYRGDVVVTQGSTKLTGNTVTLKQDKNGDIEVVTSVGKPAYYEQKPAPDKDVTKAYGLTIQYFVTQNRVVLIDQAKVIQEGNTFEGEKIVYDTQRQIVNAGRATGSQVTSPRPRIDMVIQPKKKAQ.

Positions 1–24 (MRFVNTLPLIFGLTAALGSSMALA) are cleaved as a signal peptide.

Belongs to the LptA family. In terms of assembly, component of the lipopolysaccharide transport and assembly complex. Mainly exists as a dimer in solution. Tends to oligomerize already in solution. The protomers follow one another in a head-to-tail fashion throughout the crystal lattice, yielding a continuous fiber arrangement.

The protein resides in the periplasm. In terms of biological role, involved in the assembly of lipopolysaccharide (LPS). Required for the translocation of LPS from the inner membrane to the outer membrane. May form a bridge between the inner membrane and the outer membrane, via interactions with LptC and LptD, thereby facilitating LPS transfer across the periplasm. Binds LPS. Important for cell envelope stability and essential for growth, cell viability and ability to cause infection in different animal models. In Pseudomonas aeruginosa (strain ATCC 15692 / DSM 22644 / CIP 104116 / JCM 14847 / LMG 12228 / 1C / PRS 101 / PAO1), this protein is Lipopolysaccharide export system protein LptH.